Reading from the N-terminus, the 221-residue chain is UPF0502 protein XOO0224 (221 aa).

The protein belongs to the UPF0502 family.

The chain is UPF0502 protein XOO0224 from Xanthomonas oryzae pv. oryzae (strain MAFF 311018).